A 351-amino-acid chain; its full sequence is Cyanuric acid amidohydrolase (351 aa).

The interval 1–96 (MPSLRAHVFR…HWTVFARETV (96 aa)) is RU A. Substrate contacts are provided by residues Arg53 and 77–78 (SG). The RU B stretch occupies residues 103–240 (ALAIGVSRTP…HEIIVLGMSA (138 aa)). Lys153 is an active-site residue. Residues Arg185 and 223 to 224 (SS) contribute to the substrate site. Ser223 acts as the Nucleophile in catalysis. The RU C stretch occupies residues 246-351 (LSIDHAVMLD…PVAIIVEKEQ (106 aa)). Residue Glu283 participates in Mg(2+) binding. Residues Arg310 and 329 to 330 (SG) each bind substrate. Positions 332, 335, 336, 337, and 340 each coordinate Mg(2+).

The protein belongs to the cyclic amide hydrolase (CyAH) family. As to quaternary structure, homotetramer.

It catalyses the reaction cyanurate + H2O = 1-carboxybiuret + H(+). The protein operates within xenobiotic degradation; atrazine degradation; biuret from cyanurate: step 1/1. Its activity is regulated as follows. Inhibited by barbituric acid. Functionally, responsible for the hydrolysis of cyanuric acid, an intermediate formed during catabolism of s-triazine based compounds in herbicides such as atrazine and polymers such as melamine. Catalyzes the hydrolytic opening of the s-triazine ring of cyanuric acid (2,4,6-trihydroxy-s-triazine) to yield carbon dioxide and carboxybiuret, which spontaneously decarboxylates to biuret. The polypeptide is Cyanuric acid amidohydrolase (Rhizobium leguminosarum bv. trifolii (strain WSM1325)).